Consider the following 735-residue polypeptide: FHF complex subunit HOOK-interacting protein 2B (735 aa).

A disordered region spans residues 183-229 (SSSTSDEAAEKDCSGSSSPERASSPSSSSSACSLLSRSGAHPVSSPQ). Over residues 196 to 221 (SGSSSPERASSPSSSSSACSLLSRSG) the composition is skewed to low complexity.

The protein belongs to the FHIP family.

The sequence is that of FHF complex subunit HOOK-interacting protein 2B (fhip2b) from Danio rerio (Zebrafish).